We begin with the raw amino-acid sequence, 200 residues long: ATP-dependent Clp protease proteolytic subunit 1 (200 aa).

S98 functions as the Nucleophile in the catalytic mechanism. H123 is an active-site residue.

It belongs to the peptidase S14 family. In terms of assembly, fourteen ClpP subunits assemble into 2 heptameric rings which stack back to back to give a disk-like structure with a central cavity, resembling the structure of eukaryotic proteasomes.

Its subcellular location is the cytoplasm. It carries out the reaction Hydrolysis of proteins to small peptides in the presence of ATP and magnesium. alpha-casein is the usual test substrate. In the absence of ATP, only oligopeptides shorter than five residues are hydrolyzed (such as succinyl-Leu-Tyr-|-NHMec, and Leu-Tyr-Leu-|-Tyr-Trp, in which cleavage of the -Tyr-|-Leu- and -Tyr-|-Trp bonds also occurs).. In terms of biological role, cleaves peptides in various proteins in a process that requires ATP hydrolysis. Has a chymotrypsin-like activity. Plays a major role in the degradation of misfolded proteins. The polypeptide is ATP-dependent Clp protease proteolytic subunit 1 (Mycobacterium leprae (strain TN)).